Here is a 591-residue protein sequence, read N- to C-terminus: General transcription and DNA repair factor IIH subunit TFB1-1 (591 aa).

2 BSD domains span residues 112–166 (STSS…GKDS) and 191–243 (RTNR…YLYS).

The protein belongs to the TFB1 family. In terms of assembly, component of the 7-subunit TFIIH core complex composed of XPB, XPD, TFB1/GTF2H1, GTF2H2/P44, TFB4/GTF2H3, TFB2/GTF2H4 and TFB5/GTF2H5, which is active in NER. The core complex associates with the 3-subunit CDK-activating kinase (CAK) module composed of CYCH1/cyclin H1, CDKD and MAT1/At4g30820 to form the 10-subunit holoenzyme (holo-TFIIH) active in transcription.

The protein localises to the nucleus. Functionally, component of the general transcription and DNA repair factor IIH (TFIIH) core complex, which is involved in general and transcription-coupled nucleotide excision repair (NER) of damaged DNA and, when complexed to CAK, in RNA transcription by RNA polymerase II. In NER, TFIIH acts by opening DNA around the lesion to allow the excision of the damaged oligonucleotide and its replacement by a new DNA fragment. In transcription, TFIIH has an essential role in transcription initiation. When the pre-initiation complex (PIC) has been established, TFIIH is required for promoter opening and promoter escape. Phosphorylation of the C-terminal tail (CTD) of the largest subunit of RNA polymerase II by the kinase module CAK controls the initiation of transcription. The sequence is that of General transcription and DNA repair factor IIH subunit TFB1-1 from Arabidopsis thaliana (Mouse-ear cress).